Reading from the N-terminus, the 178-residue chain is Adenine phosphoribosyltransferase (178 aa).

It belongs to the purine/pyrimidine phosphoribosyltransferase family. Homodimer.

The protein localises to the cytoplasm. The enzyme catalyses AMP + diphosphate = 5-phospho-alpha-D-ribose 1-diphosphate + adenine. The protein operates within purine metabolism; AMP biosynthesis via salvage pathway; AMP from adenine: step 1/1. Catalyzes a salvage reaction resulting in the formation of AMP, that is energically less costly than de novo synthesis. This is Adenine phosphoribosyltransferase from Novosphingobium aromaticivorans (strain ATCC 700278 / DSM 12444 / CCUG 56034 / CIP 105152 / NBRC 16084 / F199).